The primary structure comprises 222 residues: 7-cyano-7-deazaguanine synthase (222 aa).

8 to 18 contacts ATP; the sequence is LSGGMDSTTAA. Residues Cys-187, Cys-195, Cys-198, and Cys-201 each coordinate Zn(2+).

Belongs to the QueC family. It depends on Zn(2+) as a cofactor.

The enzyme catalyses 7-carboxy-7-deazaguanine + NH4(+) + ATP = 7-cyano-7-deazaguanine + ADP + phosphate + H2O + H(+). The protein operates within purine metabolism; 7-cyano-7-deazaguanine biosynthesis. In terms of biological role, catalyzes the ATP-dependent conversion of 7-carboxy-7-deazaguanine (CDG) to 7-cyano-7-deazaguanine (preQ(0)). The protein is 7-cyano-7-deazaguanine synthase of Nautilia profundicola (strain ATCC BAA-1463 / DSM 18972 / AmH).